A 68-amino-acid chain; its full sequence is Antimicrobial peptide VpCT3 (68 aa).

The first 23 residues, 1–23, serve as a signal peptide directing secretion; the sequence is MKTQIVILIVAVLVLQLVSQSDA. L36 carries the post-translational modification Leucine amide. A propeptide spanning residues 37 to 68 is cleaved from the precursor; it reads GKRGLKNLDQYNDLFDGEISDADIKFLQDLMR.

The protein belongs to the non-disulfide-bridged peptide (NDBP) superfamily. Short antimicrobial peptide (group 4) family. Expressed by the venom gland.

The protein localises to the secreted. Its subcellular location is the target cell membrane. Antimicrobial peptide with weak activity against all bacteria tested (MIC&gt;100 uM) and all yeasts tested (MIC&gt;200 uM). Also provokes weak hemolysis on human erythrocytes (HC(50)=83.7 uM). In Mesomexovis punctatus (Scorpion), this protein is Antimicrobial peptide VpCT3.